The sequence spans 214 residues: Octanoyltransferase (214 aa).

Positions 28-210 (GTAEDALYLL…EFGKVFTDTA (183 aa)) constitute a BPL/LPL catalytic domain. Substrate-binding positions include 73–80 (RGGNITCH), 140–142 (SIG), and 153–155 (GLS). The active-site Acyl-thioester intermediate is Cys171.

It belongs to the LipB family.

The protein resides in the cytoplasm. It carries out the reaction octanoyl-[ACP] + L-lysyl-[protein] = N(6)-octanoyl-L-lysyl-[protein] + holo-[ACP] + H(+). It participates in protein modification; protein lipoylation via endogenous pathway; protein N(6)-(lipoyl)lysine from octanoyl-[acyl-carrier-protein]: step 1/2. In terms of biological role, catalyzes the transfer of endogenously produced octanoic acid from octanoyl-acyl-carrier-protein onto the lipoyl domains of lipoate-dependent enzymes. Lipoyl-ACP can also act as a substrate although octanoyl-ACP is likely to be the physiological substrate. The protein is Octanoyltransferase of Maridesulfovibrio salexigens (strain ATCC 14822 / DSM 2638 / NCIMB 8403 / VKM B-1763) (Desulfovibrio salexigens).